Consider the following 188-residue polypeptide: uncharacterized protein (188 aa).

The protein resides in the plastid. The protein localises to the cyanelle. This is an uncharacterized protein from Cyanophora paradoxa.